The sequence spans 315 residues: HTH-type transcriptional regulator TreR (315 aa).

One can recognise an HTH lacI-type domain in the interval 5–59; sequence LTIKDIARLSGVGKSTVSRVLNNESGVSQLTRERVEAVMNQHGFSPSRSARAMRG. A DNA-binding region (H-T-H motif) is located at residues 7–26; sequence IKDIARLSGVGKSTVSRVLN. Alpha,alpha-trehalose 6-phosphate contacts are provided by residues 71–77, glycine 126, arginine 147, 187–190, arginine 194, threonine 242, and tyrosine 284; these read RLDSLSE and DVTT.

In terms of assembly, homodimer.

In terms of biological role, repressor of the treBC operon. It is able to bind trehalose-6-phosphate and trehalose. The sequence is that of HTH-type transcriptional regulator TreR (treR) from Escherichia coli (strain K12).